Reading from the N-terminus, the 263-residue chain is uncharacterized protein (263 aa).

Residues 44-131 (QVYSLGTPNG…YLADKFNHLI (88 aa)) form the GST N-terminal domain. The GST C-terminal domain occupies 134–263 (DWAQRTEVLN…ALEVDYKAIK (130 aa)).

Belongs to the GST superfamily. In terms of assembly, homodimer.

This is an uncharacterized protein from Streptococcus mutans serotype c (strain ATCC 700610 / UA159).